The following is a 246-amino-acid chain: Biosynthetic peptidoglycan transglycosylase (246 aa).

The helical transmembrane segment at 20–42 (WLRWLMAAPLLFAAASVLQVLIL) threads the bilayer.

It belongs to the glycosyltransferase 51 family.

It is found in the cell inner membrane. The enzyme catalyses [GlcNAc-(1-&gt;4)-Mur2Ac(oyl-L-Ala-gamma-D-Glu-L-Lys-D-Ala-D-Ala)](n)-di-trans,octa-cis-undecaprenyl diphosphate + beta-D-GlcNAc-(1-&gt;4)-Mur2Ac(oyl-L-Ala-gamma-D-Glu-L-Lys-D-Ala-D-Ala)-di-trans,octa-cis-undecaprenyl diphosphate = [GlcNAc-(1-&gt;4)-Mur2Ac(oyl-L-Ala-gamma-D-Glu-L-Lys-D-Ala-D-Ala)](n+1)-di-trans,octa-cis-undecaprenyl diphosphate + di-trans,octa-cis-undecaprenyl diphosphate + H(+). It participates in cell wall biogenesis; peptidoglycan biosynthesis. In terms of biological role, peptidoglycan polymerase that catalyzes glycan chain elongation from lipid-linked precursors. The protein is Biosynthetic peptidoglycan transglycosylase of Xanthomonas axonopodis pv. citri (strain 306).